The primary structure comprises 293 residues: MATYAVGDLQGCLEPLKCLLQQVAFDPALDRLWLVGDLVNRGPQSLETLRFLYGMRESLVCVLGNHDLHLLAAAKNIERLKKSDTLREILEAPDCAELMEWLRQQKLMHYDEQREVAMVHAGIPPQWSLRKALKYAEEVETALRDDNLLPPFLDGMYGNEPAKWDSDLKGVTRLRVITNYFTRMRFCTAEGKLDLKSKEGLDTAPPGYKPWFQHKERKTRGLRIIFGHWAALEGNVHEPGICALDTGCVWGGSLTLMNVDSGERLSCKCDEHGAALPTVAPLITESSPVSAPR.

The protein belongs to the Ap4A hydrolase family.

It carries out the reaction P(1),P(4)-bis(5'-adenosyl) tetraphosphate + H2O = 2 ADP + 2 H(+). Hydrolyzes diadenosine 5',5'''-P1,P4-tetraphosphate to yield ADP. This Pseudomonas fluorescens (strain Pf0-1) protein is Bis(5'-nucleosyl)-tetraphosphatase, symmetrical.